The chain runs to 86 residues: MKVSVLITLAVLGVMFVWASAAELEERGSDQRDSPAWLKSMERIFRSEERECRKMFGGCSVDSDCCAHLGCKPTLKYCAWDGTFGK.

An N-terminal signal peptide occupies residues 1–21 (MKVSVLITLAVLGVMFVWASA). Positions 22 to 50 (AELEERGSDQRDSPAWLKSMERIFRSEER) are excised as a propeptide. 3 disulfide bridges follow: Cys52/Cys66, Cys59/Cys71, and Cys65/Cys78. A Phenylalanine amide modification is found at Phe84.

It belongs to the neurotoxin 10 (Hwtx-1) family. 28 (Jztx-11) subfamily. In terms of tissue distribution, expressed by the venom gland.

It is found in the secreted. Functionally, this toxin acts as a voltage-dependent gating-modifier. It inhibits the sodium conductance (IC(50)=124 nM) and slows the fast inactivation (EC(50)=1180 nM) of Nav1.5/SCN5A. It significantly shifts the activation to more depolarized voltages and decreases the deactivation of Nav1.5 currents upon extreme depolarization, but only slightly affects voltage-dependence of steady-state inactivation. In addition, this toxin causes an approximately five-fold decrease in the rate of recovery from inactivation and an approximately 1.9-fold reduction in the closed-state inactivation rate. This toxin integrates the functions of site 3 toxins (alpha-scorpion toxins) with site 4 toxins (beta-scorpion and spider toxins) by targeting multiple sites on Nav1.5. Also shows inhibition of voltage-gated potassium channels (5 uM completely inhibits Kv2.1/KCNB1, whereas 5 uM moderately inhibits Kv4.2/KCND2 Kv4.1/KCND1 channels). This Chilobrachys guangxiensis (Chinese earth tiger tarantula) protein is Kappa-theraphotoxin-Cg1a 3.